Reading from the N-terminus, the 76-residue chain is Sec-independent protein translocase protein TatA (76 aa).

Residues 1-21 traverse the membrane as a helical segment; that stretch reads MGGLSIWHWLIVLLIVALVFG. A disordered region spans residues 40–76; that stretch reads KDGMKEGETPADAQQLPRSGAVDVNAKETTRSDSNKA. Over residues 64–76 the composition is skewed to basic and acidic residues; it reads NAKETTRSDSNKA.

Belongs to the TatA/E family. In terms of assembly, the Tat system comprises two distinct complexes: a TatABC complex, containing multiple copies of TatA, TatB and TatC subunits, and a separate TatA complex, containing only TatA subunits. Substrates initially bind to the TatABC complex, which probably triggers association of the separate TatA complex to form the active translocon.

The protein resides in the cell inner membrane. Functionally, part of the twin-arginine translocation (Tat) system that transports large folded proteins containing a characteristic twin-arginine motif in their signal peptide across membranes. TatA could form the protein-conducting channel of the Tat system. The sequence is that of Sec-independent protein translocase protein TatA from Burkholderia cenocepacia (strain HI2424).